We begin with the raw amino-acid sequence, 509 residues long: Maturase K (509 aa).

This sequence belongs to the intron maturase 2 family. MatK subfamily.

It is found in the plastid. Its subcellular location is the chloroplast. Its function is as follows. Usually encoded in the trnK tRNA gene intron. Probably assists in splicing its own and other chloroplast group II introns. The polypeptide is Maturase K (Solanum tuberosum (Potato)).